Reading from the N-terminus, the 200-residue chain is Protein RISC-INTERACTING CLEARING 3'-5' EXORIBONUCLEASE 1 (200 aa).

3 oligomerization regions span residues 35-66 (SKILEDSVWNGNRSIVFDVYWDVKSVSTKSEW), 102-127 (KFVTFVGVQIQEDLALLKENHGIVIR), and 166-173 (DSIQSKWD).

Belongs to the RICE family. As to quaternary structure, homohexamer with DnaQ-like exonuclease fold in a ring-shaped structure with a central cavity. Component of AGO1 and AGO10-centered RNA-induced silencing complexes (RISC). Interacts with and acts as a cofactor of AGO1 and AGO10. As to expression, ubiquitously expressed throughout development in germinating seeds, cotyledons, leaves and roots of young seedlings and adult plants, stems and inflorescence.

The protein resides in the cytoplasm. It catalyses the reaction Exonucleolytic cleavage in the 3'- to 5'-direction to yield nucleoside 5'-phosphates.. 3'-to-5' exoribonuclease (RNase) specifically targeting single-stranded RNAs. Triggers miRNA accumulation in RNA-induced silencing complex (RISC), composed of miRNAs and AGO proteins, by degrading uridylated cleavage fragments. Required during plant growth and development. The protein is Protein RISC-INTERACTING CLEARING 3'-5' EXORIBONUCLEASE 1 of Arabidopsis thaliana (Mouse-ear cress).